The following is a 461-amino-acid chain: E3 ubiquitin-protein ligase TRIM15 (461 aa).

The segment at 12-57 adopts an RING-type zinc-finger fold; it reads CSDCQGRLEDAVTAACGHTFCRLCLPLPPQMGAQPSSRVLLCPVCQ. The segment at 74–115 adopts a B box-type zinc-finger fold; it reads LGETYCEEHGEKIYFFCENDAEFLCVFCREGPSHQAHAVGFL. Residues Cys79, His82, Cys101, and His107 each coordinate Zn(2+). The stretch at 123-230 forms a coiled coil; that stretch reads RDRLRGRLEA…EKCQQPASEL (108 aa). A B30.2/SPRY domain is found at 272–461; sequence EMLRAFSENL…KKGSCLTLKG (190 aa).

This sequence belongs to the TRIM/RBCC family. Interacts with paxillin/PXN; this interaction recruits TRIM15 to focal adhesions. Interacts with TRIM8; this interaction prevents TRIM8 cytoplasmic translocation.

It localises to the cytoplasm. The protein resides in the nucleus. It is found in the cell junction. Its subcellular location is the focal adhesion. The catalysed reaction is S-ubiquitinyl-[E2 ubiquitin-conjugating enzyme]-L-cysteine + [acceptor protein]-L-lysine = [E2 ubiquitin-conjugating enzyme]-L-cysteine + N(6)-ubiquitinyl-[acceptor protein]-L-lysine.. Its function is as follows. E3 ubiquitin ligase that plays a role in several processes including innate antiviral immnity, cell migration and chemotaxis. Acts as a 'Lys-63'-specific ubiquitin ligase for MAPK1/ERK2 and MAPK3/ERK1, promoting their activation by facilitating their interaction with MAP2K1 and MAP2K2. Also plays a role in cell migration and chemotaxis by acting as a stable focal adhesion component upon recruitment by multi-adapter protein paxillin/PXN. Functions in the RIGI-mediated interferon induction pathway upstream or at the level of MAVS. Inhibits NF-kappa-B activation by turnover of 'Lys-63'-linked ubiquitination of MAP3K7/TAK1. Mechanistically, prevents TRIM8 cytoplasmic translocation and thus inhibits TRIM8-mediated 'Lys-63'-linked polyubiquitination of MAP3K7/TAK1 in the cytoplasm. Also has an important regulatory effect on the activation of hepatic stellate cells (HSCs). The protein is E3 ubiquitin-protein ligase TRIM15 (TRIM15) of Sus scrofa (Pig).